The chain runs to 368 residues: Peptide chain release factor 2 (368 aa).

An N5-methylglutamine modification is found at Gln-250.

The protein belongs to the prokaryotic/mitochondrial release factor family. Post-translationally, methylated by PrmC. Methylation increases the termination efficiency of RF2.

The protein localises to the cytoplasm. Functionally, peptide chain release factor 2 directs the termination of translation in response to the peptide chain termination codons UGA and UAA. The polypeptide is Peptide chain release factor 2 (Rickettsia felis (strain ATCC VR-1525 / URRWXCal2) (Rickettsia azadi)).